We begin with the raw amino-acid sequence, 199 residues long: MAFKLPALPYGMRELIPHISEETLSFHYGKHHAGYVNKLNSLIKGTPLESCTIEELILGQTGAVFNNAAQIWNHTFYWNSMGPNCGGEPTGPIRKKIEEKFGSFSAFKTDFSNLLAGHFGSGWGWLVLKDDGTADIVQTHDAGSPLKENLGRPLLCCDVWEHAYYIDYKNDRLSYINSWWNLVNWDFANKNLEAPFKWS.

The Fe cation site is built by His27, His74, Asp158, and His162.

Belongs to the iron/manganese superoxide dismutase family. As to quaternary structure, homodimer. Fe cation is required as a cofactor.

It carries out the reaction 2 superoxide + 2 H(+) = H2O2 + O2. Destroys superoxide anion radicals which are normally produced within the cells and which are toxic to biological systems. The sequence is that of Superoxide dismutase [Fe] (SODB) from Babesia bovis.